Here is a 402-residue protein sequence, read N- to C-terminus: Propionate kinase (402 aa).

Positions 11 and 18 each coordinate ATP. Residue Asn11 coordinates Mg(2+). Arg86 provides a ligand contact to substrate. The active-site Proton donor/acceptor is the Asp143. ATP is bound by residues His175, 203–207 (HLGNG), 278–280 (DLR), and 326–330 (GIGEN).

It belongs to the acetokinase family. TdcD subfamily. In terms of assembly, homodimer. Mg(2+) serves as cofactor.

It catalyses the reaction propanoate + ATP = propanoyl phosphate + ADP. Its pathway is amino-acid degradation; L-threonine degradation via propanoate pathway; propanoate from L-threonine: step 4/4. In terms of biological role, catalyzes the conversion of propionyl phosphate and ADP to propionate and ATP. The protein is Propionate kinase of Escherichia coli O157:H7.